The following is a 579-amino-acid chain: uncharacterized protein (579 aa).

Belongs to the UbiD family.

This is an uncharacterized protein from Chlamydia trachomatis serovar D (strain ATCC VR-885 / DSM 19411 / UW-3/Cx).